The chain runs to 159 residues: Transcriptional repressor NrdR (159 aa).

The span at Met1 to Ser11 shows a compositional bias: polar residues. Positions Met1 to Asp20 are disordered. A zinc finger spans residues Cys3–Cys34. The ATP-cone domain occupies Ile49–Asp139.

This sequence belongs to the NrdR family. It depends on Zn(2+) as a cofactor.

In terms of biological role, negatively regulates transcription of bacterial ribonucleotide reductase nrd genes and operons by binding to NrdR-boxes. This is Transcriptional repressor NrdR from Prochlorococcus marinus (strain NATL1A).